Consider the following 364-residue polypeptide: D-alanine--D-alanine ligase (364 aa).

Residues lysine 134–threonine 344 form the ATP-grasp domain. Asparagine 167–glutamate 222 is an ATP binding site. Mg(2+) contacts are provided by aspartate 297, glutamate 311, and asparagine 313.

The protein belongs to the D-alanine--D-alanine ligase family. Mg(2+) serves as cofactor. The cofactor is Mn(2+).

Its subcellular location is the cytoplasm. It catalyses the reaction 2 D-alanine + ATP = D-alanyl-D-alanine + ADP + phosphate + H(+). The protein operates within cell wall biogenesis; peptidoglycan biosynthesis. Functionally, cell wall formation. The protein is D-alanine--D-alanine ligase of Borrelia duttonii (strain Ly).